The sequence spans 181 residues: Cytidylate kinase (181 aa).

Position 12 to 20 (12 to 20 (GLAGSGTTT)) interacts with ATP.

The protein belongs to the cytidylate kinase family. Type 2 subfamily.

It localises to the cytoplasm. It catalyses the reaction CMP + ATP = CDP + ADP. It carries out the reaction dCMP + ATP = dCDP + ADP. In Pyrococcus abyssi (strain GE5 / Orsay), this protein is Cytidylate kinase (cmk).